The sequence spans 447 residues: Flagellum-specific ATP synthase (447 aa).

Residue 167 to 174 (SGSGVGKS) participates in ATP binding.

Belongs to the ATPase alpha/beta chains family.

Its subcellular location is the cytoplasm. It catalyses the reaction ATP + H2O + 4 H(+)(in) = ADP + phosphate + 5 H(+)(out). Probable catalytic subunit of a protein translocase for flagellum-specific export, or a proton translocase involved in local circuits at the flagellum. This Treponema pallidum (strain Nichols) protein is Flagellum-specific ATP synthase (fliI).